Consider the following 147-residue polypeptide: Large ribosomal subunit protein bL9 (147 aa).

This sequence belongs to the bacterial ribosomal protein bL9 family.

Functionally, binds to the 23S rRNA. The protein is Large ribosomal subunit protein bL9 of Myxococcus xanthus (strain DK1622).